A 342-amino-acid chain; its full sequence is Isopentenyl-diphosphate delta-isomerase (342 aa).

Substrate is bound at residue 11–12 (RK). FMN contacts are provided by residues Ser-68, 69-71 (SMT), Ser-99, and Asn-128. 99 to 101 (SQR) contacts substrate. Gln-162 provides a ligand contact to substrate. Glu-163 is a Mg(2+) binding site. FMN is bound by residues Lys-194, Ser-219, Thr-224, 275-277 (GVR), and 296-297 (AK).

This sequence belongs to the IPP isomerase type 2 family. As to quaternary structure, homooctamer. Dimer of tetramers. FMN serves as cofactor. NADPH is required as a cofactor. The cofactor is Mg(2+).

It localises to the cytoplasm. It catalyses the reaction isopentenyl diphosphate = dimethylallyl diphosphate. Involved in the biosynthesis of isoprenoids. Catalyzes the 1,3-allylic rearrangement of the homoallylic substrate isopentenyl (IPP) to its allylic isomer, dimethylallyl diphosphate (DMAPP). The chain is Isopentenyl-diphosphate delta-isomerase from Legionella pneumophila (strain Corby).